Consider the following 888-residue polypeptide: Glutamate receptor 3 (888 aa).

The first 22 residues, 1–22, serve as a signal peptide directing secretion; the sequence is MGQSVLRAVFFLVLGLLGHSHG. Over 23 to 546 the chain is Extracellular; that stretch reads GFPNTISIGG…GVFSFLDPLA (524 aa). 5 N-linked (GlcNAc...) asparagine glycosylation sites follow: asparagine 57, asparagine 260, asparagine 374, asparagine 409, and asparagine 416. Cysteine 85 and cysteine 334 are disulfide-bonded. L-glutamate contacts are provided by proline 502, threonine 504, and arginine 509. The helical transmembrane segment at 547–567 threads the bilayer; it reads YEIWMCIVFAYIGVSVVLFLV. Over 568-596 the chain is Cytoplasmic; sequence SRFSPYEWHLEDNNEEPRDPQSPPDPPNE. Residues 597-612 constitute an intramembrane region (helical; Pore-forming); that stretch reads FGIFNSLWFSLGAFMQ. Residues 613–615 lie within the membrane without spanning it; that stretch reads QGC. Cysteine 615 is lipidated: S-palmitoyl cysteine. Over 616–621 the chain is Cytoplasmic; that stretch reads DISPRS. The helical transmembrane segment at 622 to 642 threads the bilayer; sequence LSGRIVGGVWWFFTLIIISSY. Residues 643-817 are Extracellular-facing; sequence TANLAAFLTV…DKTSALSLSN (175 aa). Serine 680, threonine 681, and glutamate 731 together coordinate L-glutamate. Cysteine 744 and cysteine 799 form a disulfide bridge. Residues 818-838 form a helical membrane-spanning segment; it reads VAGVFYILVGGLGLAMMVALI. Residues 839–888 lie on the Cytoplasmic side of the membrane; that stretch reads EFCYKSRAESKRMKLTKNTQNFKPAPATNTQNYATYREGYNVYGTESVKI. Cysteine 841 carries S-palmitoyl cysteine lipidation. 2 positions are modified to phosphotyrosine: tyrosine 871 and tyrosine 881.

Belongs to the glutamate-gated ion channel (TC 1.A.10.1) family. GRIA3 subfamily. As to quaternary structure, homotetramer or heterotetramer of pore-forming glutamate receptor subunits. Tetramers may be formed by the dimerization of dimers. Interacts with PICK1, GRIP1 and GRIP2. Found in a complex with GRIA1, GRIA2, GRIA4, CNIH2, CNIH3, CACNG2, CACNG3, CACNG4, CACNG5, CACNG7 and CACNG8. Interacts with CACNG5. Found in a complex with GRIA1, GRIA2, GRIA4, DLG4, CACNG8 and CNIH2.

The protein resides in the cell membrane. The protein localises to the postsynaptic cell membrane. Its subcellular location is the postsynaptic density membrane. The enzyme catalyses Ca(2+)(in) = Ca(2+)(out). Ionotropic glutamate receptor that functions as a ligand-gated cation channel, gated by L-glutamate and glutamatergic agonists such as alpha-amino-3-hydroxy-5-methyl-4-isoxazolepropionic acid (AMPA), quisqualic acid, and kainic acid. L-glutamate acts as an excitatory neurotransmitter at many synapses in the central nervous system and plays an important role in fast excitatory synaptic transmission by inducing long-term potentiation. Binding of the excitatory neurotransmitter L-glutamate induces a conformation change, leading to the opening of the cation channel, and thereby converts the chemical signal to an electrical impulse upon entry of calcium. The receptor then desensitizes rapidly and enters a transient inactive state, characterized by the presence of bound agonist. In the presence of CACNG8, shows resensitization which is characterized by a delayed accumulation of current flux upon continued application of glutamate. This Mus musculus (Mouse) protein is Glutamate receptor 3.